The chain runs to 409 residues: Microfibrillar-associated protein 3-like (409 aa).

The N-terminal stretch at 1 to 28 (MGLLKSHLTVCLPPSVPFLILVSTLATA) is a signal peptide. The Extracellular portion of the chain corresponds to 29–148 (KSVTNSTLNG…TLRVIFTSGD (120 aa)). Asn-33, Asn-37, Asn-67, Asn-111, and Asn-135 each carry an N-linked (GlcNAc...) asparagine glycan. The Ig-like C2-type domain maps to 47 to 141 (PVIIARTDHI…GTINNTVTLR (95 aa)). Cys-68 and Cys-125 form a disulfide bridge. Residues 149–169 (MGVYYMVVCLVAFTIVMILNI) traverse the membrane as a helical segment. The Cytoplasmic segment spans residues 170-409 (TRLCMMSSHL…NTCIIYESHV (240 aa)). Phosphotyrosine is present on Tyr-287. Phosphoserine is present on residues Ser-298, Ser-303, Ser-306, and Ser-307. Residues 319–392 (VSVHPQSKKD…LPPAHLETTE (74 aa)) are disordered. Over residues 333 to 348 (QEGENLEVKDEEETEP) the composition is skewed to acidic residues. Residues 362–372 (DITTTELTSEE) show a composition bias toward polar residues.

It is found in the cell membrane. The protein localises to the nucleus. It localises to the cytoplasm. Its function is as follows. May participate in the nuclear signaling of EGFR and MAPK1/ERK2. This Rattus norvegicus (Rat) protein is Microfibrillar-associated protein 3-like (Mfap3l).